The sequence spans 207 residues: Guanylate kinase (207 aa).

Residues 4-184 (GTLYIVSAPS…ALADLHTIIR (181 aa)) form the Guanylate kinase-like domain. 11–18 (APSGAGKS) is an ATP binding site.

The protein belongs to the guanylate kinase family.

It is found in the cytoplasm. It catalyses the reaction GMP + ATP = GDP + ADP. Its function is as follows. Essential for recycling GMP and indirectly, cGMP. This Photorhabdus laumondii subsp. laumondii (strain DSM 15139 / CIP 105565 / TT01) (Photorhabdus luminescens subsp. laumondii) protein is Guanylate kinase.